The chain runs to 478 residues: MPYILLDCDKFIPERMKHTYVYDPEENILPACNTNTVPGDMTERGCAFAGSRGVVGGPIKDAIHMVHGPIGCAYYTWGTRRALSDNEFHRRYCFCTDMQESDIVYGGEKTLEKASLEVMEEFPEASGTFIYTTCPTALIGDNVDAIARNIEKATKKPAIAINSPGFCGVSQSKGHHVFNMTFYKWLKLKRKEFPEKCMPEEEKTPYDVALIGDYNMDWDVAVIKPLLEKIGCRYVTTFTGNASLDELFQLMDVKLNIVHCQRSAEYIAQMINDGFDIPYTRATFFGLSDIAESLYDVAKALDLPKERVDQVIKEEMEAIQPKLDYYKSKLEGKTCMVYVGGPRTWHWIKAMKDLGVEYVAACCTFSHTDDYEKMNKNFKEAGIKDILVIDAPNEPELEEAVKTLDPDFMLVGLKERYLFRKYGVPTINSHSYEEGPYAGYRGFVNFARDVYKAVCHPVWNVLKEGEDKFKNFKGDLNE.

3 residues coordinate [8Fe-7S] cluster: C46, C72, and C134. Residues C260 and H430 each contribute to the [7Fe-Mo-9S-C-homocitryl] cluster site.

The protein belongs to the NifD/NifK/NifE/NifN family. Tetramer of two alpha and two beta chains. Forms complex with the iron protein (nitrogenase component 2). [8Fe-7S] cluster is required as a cofactor. The cofactor is [7Fe-Mo-9S-C-homocitryl] cluster.

The catalysed reaction is N2 + 8 reduced [2Fe-2S]-[ferredoxin] + 16 ATP + 16 H2O = H2 + 8 oxidized [2Fe-2S]-[ferredoxin] + 2 NH4(+) + 16 ADP + 16 phosphate + 6 H(+). Its function is as follows. This molybdenum-iron protein is part of the nitrogenase complex that catalyzes the key enzymatic reactions in nitrogen fixation. The protein is Nitrogenase molybdenum-iron protein alpha chain (nifD) of Methanothermococcus thermolithotrophicus (Methanococcus thermolithotrophicus).